We begin with the raw amino-acid sequence, 232 residues long: Ubiquinone biosynthesis O-methyltransferase (232 aa).

S-adenosyl-L-methionine contacts are provided by Arg36, Gly55, Asp76, and Met120.

The protein belongs to the methyltransferase superfamily. UbiG/COQ3 family.

It catalyses the reaction a 3-demethylubiquinol + S-adenosyl-L-methionine = a ubiquinol + S-adenosyl-L-homocysteine + H(+). The enzyme catalyses a 3-(all-trans-polyprenyl)benzene-1,2-diol + S-adenosyl-L-methionine = a 2-methoxy-6-(all-trans-polyprenyl)phenol + S-adenosyl-L-homocysteine + H(+). It functions in the pathway cofactor biosynthesis; ubiquinone biosynthesis. O-methyltransferase that catalyzes the 2 O-methylation steps in the ubiquinone biosynthetic pathway. This chain is Ubiquinone biosynthesis O-methyltransferase, found in Burkholderia lata (strain ATCC 17760 / DSM 23089 / LMG 22485 / NCIMB 9086 / R18194 / 383).